A 260-amino-acid chain; its full sequence is Carbonic anhydrase 3 (260 aa).

The residue at position 2 (Ala-2) is an N-acetylalanine. Positions 3–259 constitute an Alpha-carbonic anhydrase domain; that stretch reads KEWGYADHNG…LKGRVVRASF (257 aa). 4 positions are modified to phosphoserine: Ser-29, Ser-43, Ser-50, and Ser-55. Residues 64 to 67 form an involved in proton transfer region; the sequence is RTCR. Phosphothreonine is present on Thr-73. Zn(2+) contacts are provided by His-94, His-96, and His-119. Tyr-127 is subject to Phosphotyrosine. Residues Thr-129 and Thr-176 each carry the phosphothreonine modification. An S-glutathionyl cysteine mark is found at Cys-182 and Cys-187. 198-199 serves as a coordination point for substrate; that stretch reads TT. The residue at position 216 (Thr-216) is a Phosphothreonine. Ser-219 is modified (phosphoserine).

The protein belongs to the alpha-carbonic anhydrase family. The cofactor is Zn(2+). In terms of processing, S-thiolated both by thiol-disulfide exchange with glutathione disulfide and by oxyradical-initiated S-thiolation with reduced glutathione. Post-translationally, S-glutathionylated in hepatocytes under oxidative stress.

It localises to the cytoplasm. The catalysed reaction is hydrogencarbonate + H(+) = CO2 + H2O. With respect to regulation, inhibited by acetazolamide. In terms of biological role, reversible hydration of carbon dioxide. This Equus caballus (Horse) protein is Carbonic anhydrase 3 (CA3).